The chain runs to 549 residues: YTH domain-containing family protein 1 (549 aa).

Disordered stretches follow at residues 29-102 (QAPW…QPNM), 139-165 (GHPP…RQSG), 243-262 (GASG…QQAV), 273-298 (DSTE…AKGP), and 425-458 (REDS…SENK). Polar residues predominate over residues 49–61 (VVGQTQSSPQYNG). Residues 71–102 (QGYYMPQQQQQQQQMPQYYGGPMSPSQPQPNM) are compositionally biased toward low complexity. Composition is skewed to polar residues over residues 251–260 (TGPSATTPQQ) and 273–289 (DSTE…TPTA). Residues 307 to 513 (DRFFVLKSLT…SVGRRLIGLF (207 aa)) enclose the YTH domain.

The protein belongs to the YTHDF family. YTHDF1 subfamily.

Specifically recognizes and binds N6-methyladenosine (m6A)-containing mRNAs, and regulates their stability. M6A is a modification present at internal sites of mRNAs and some non-coding RNAs and plays a role in mRNA stability and processing. Directly interacts with the acid phosphatase APHA mRNA to increase its stability. The polypeptide is YTH domain-containing family protein 1 (Cryphonectria parasitica (strain ATCC 38755 / EP155)).